The sequence spans 279 residues: Virginiamycin B lyase (279 aa).

His-215 is a substrate binding site. A Mg(2+)-binding site is contributed by Glu-253. His-255 (proton acceptor) is an active-site residue. Glu-270 contributes to the Mg(2+) binding site.

It belongs to the Vgb family. In terms of assembly, monomer. Mg(2+) serves as cofactor.

In terms of biological role, inactivates the type B streptogramin antibiotics by linearizing the lactone ring at the ester linkage, generating a free phenylglycine carboxylate and converting the threonyl moiety into 2-amino-butenoic acid. The protein is Virginiamycin B lyase of Nocardia farcinica (strain IFM 10152).